The following is a 234-amino-acid chain: Leucyl/phenylalanyl-tRNA--protein transferase (234 aa).

The protein belongs to the L/F-transferase family.

The protein localises to the cytoplasm. It carries out the reaction N-terminal L-lysyl-[protein] + L-leucyl-tRNA(Leu) = N-terminal L-leucyl-L-lysyl-[protein] + tRNA(Leu) + H(+). The enzyme catalyses N-terminal L-arginyl-[protein] + L-leucyl-tRNA(Leu) = N-terminal L-leucyl-L-arginyl-[protein] + tRNA(Leu) + H(+). The catalysed reaction is L-phenylalanyl-tRNA(Phe) + an N-terminal L-alpha-aminoacyl-[protein] = an N-terminal L-phenylalanyl-L-alpha-aminoacyl-[protein] + tRNA(Phe). Functionally, functions in the N-end rule pathway of protein degradation where it conjugates Leu, Phe and, less efficiently, Met from aminoacyl-tRNAs to the N-termini of proteins containing an N-terminal arginine or lysine. The sequence is that of Leucyl/phenylalanyl-tRNA--protein transferase from Escherichia coli O45:K1 (strain S88 / ExPEC).